Here is a 308-residue protein sequence, read N- to C-terminus: ADP-L-glycero-D-manno-heptose-6-epimerase (308 aa).

NADP(+) contacts are provided by residues 10 to 11 (FI), 31 to 32 (DN), K38, K53, 75 to 79 (EGACS), and N92. Y139 functions as the Proton acceptor in the catalytic mechanism. K143 provides a ligand contact to NADP(+). N168 provides a ligand contact to substrate. NADP(+) is bound by residues V169 and K177. Catalysis depends on K177, which acts as the Proton acceptor. Substrate is bound by residues S179, H186, 200–203 (FAGS), R208, and Y271.

The protein belongs to the NAD(P)-dependent epimerase/dehydratase family. HldD subfamily. As to quaternary structure, homopentamer. The cofactor is NADP(+).

It carries out the reaction ADP-D-glycero-beta-D-manno-heptose = ADP-L-glycero-beta-D-manno-heptose. The protein operates within nucleotide-sugar biosynthesis; ADP-L-glycero-beta-D-manno-heptose biosynthesis; ADP-L-glycero-beta-D-manno-heptose from D-glycero-beta-D-manno-heptose 7-phosphate: step 4/4. Functionally, catalyzes the interconversion between ADP-D-glycero-beta-D-manno-heptose and ADP-L-glycero-beta-D-manno-heptose via an epimerization at carbon 6 of the heptose. This chain is ADP-L-glycero-D-manno-heptose-6-epimerase, found in Haemophilus influenzae (strain PittGG).